The following is a 538-amino-acid chain: Ribosome-associated complex subunit SSZ1 (538 aa).

The tract at residues 400–538 (PVIVNTPHLK…KTGNAVKGEL (139 aa)) is peptide-binding domain. The disordered stretch occupies residues 464 to 484 (PIPKEENAEEDDESEWSDDEP). Positions 470 to 484 (NAEEDDESEWSDDEP) are enriched in acidic residues. 2 positions are modified to phosphoserine: S477 and S480.

It belongs to the heat shock protein 70 family. As to quaternary structure, RAC is a heterodimer of the Hsp70/DnaK-type chaperone SSZ1 and the Hsp40/DnaJ-type chaperone ZUO1. RAC associates with ribosomes via ZUO1.

The protein localises to the cytoplasm. Its function is as follows. Component of the ribosome-associated complex (RAC), a heterodimeric chaperone complex involved in regulation of accurate translation termination and in folding or maintaining nascent polypeptides in a folding-competent state. RAC stimulates the ATPase activity of the ribosome-associated pool of Hsp70-type chaperones SSB1/SSB2 that bind to the nascent polypeptide chain. SSZ1 is required for ZUO1 to function efficiently as a J-protein for SSB1/SSB2. Also involved in pleiotropic drug resistance by post-translational activation of transcription factor PDR1. The sequence is that of Ribosome-associated complex subunit SSZ1 (SSZ1) from Saccharomyces cerevisiae (strain ATCC 204508 / S288c) (Baker's yeast).